A 447-amino-acid polypeptide reads, in one-letter code: Dimethylsulfoniopropionate lyase DddP (447 aa).

The interval 1–26 (MNRHFNATRKIDPSRGATLGDGSPND) is disordered. Positions 295, 297, 307, 371, 406, and 421 each coordinate a divalent metal cation.

The protein belongs to the peptidase M24B family. Homodimer. Requires a divalent metal cation as cofactor.

The catalysed reaction is S,S-dimethyl-beta-propiothetin = acrylate + dimethyl sulfide + H(+). In terms of biological role, able to cleave dimethylsulfoniopropionate (DMSP), releasing dimethyl sulfide (DMS). DMS is the principal form by which sulfur is transported from oceans to the atmosphere. The real activity of the protein is however subject to debate and it is unclear whether it constitutes a real dimethylsulfoniopropionate lyase in vivo: the low activity with DMSP as substrate suggests that DMSP is not its native substrate. This Roseobacter denitrificans (strain ATCC 33942 / OCh 114) (Erythrobacter sp. (strain OCh 114)) protein is Dimethylsulfoniopropionate lyase DddP.